The chain runs to 41 residues: Photosystem I reaction center subunit IX (41 aa).

The chain crosses the membrane as a helical span at residues 7-29; it reads YLSTAPVLLTVWLSITASGIMII.

This sequence belongs to the PsaJ family.

The protein resides in the plastid. Its subcellular location is the chloroplast thylakoid membrane. Its function is as follows. May help in the organization of the PsaE and PsaF subunits. The chain is Photosystem I reaction center subunit IX from Heterosigma akashiwo (strain NIES-293 / 8280G21-1).